A 174-amino-acid chain; its full sequence is Adenine phosphoribosyltransferase (174 aa).

This sequence belongs to the purine/pyrimidine phosphoribosyltransferase family. Homodimer.

It localises to the cytoplasm. The catalysed reaction is AMP + diphosphate = 5-phospho-alpha-D-ribose 1-diphosphate + adenine. It participates in purine metabolism; AMP biosynthesis via salvage pathway; AMP from adenine: step 1/1. Catalyzes a salvage reaction resulting in the formation of AMP, that is energically less costly than de novo synthesis. The sequence is that of Adenine phosphoribosyltransferase from Mycolicibacterium vanbaalenii (strain DSM 7251 / JCM 13017 / BCRC 16820 / KCTC 9966 / NRRL B-24157 / PYR-1) (Mycobacterium vanbaalenii).